Consider the following 566-residue polypeptide: Mucolipin-2 (566 aa).

The Cytoplasmic segment spans residues 1–65 (MARQPYRFPQ…YRARRQIPWK (65 aa)). A helical transmembrane segment spans residues 66–86 (LGLQILKIVMVTTQLVRFGLS). Residues 87-288 (NQLVVAFKED…IFGSTQKNAQ (202 aa)) are Extracellular-facing. The segment at 107–123 (KGYSGTDEDDYSCSVYT) is extracellular/lumenal pore loop. 2 disulfides stabilise this stretch: Cys-164-Cys-190 and Cys-243-Cys-274. Residues 289 to 309 (YVLVFDAFVIVICLASLILCT) form a helical membrane-spanning segment. Over 310 to 346 (RSIVLALRLRKRFLNFFLEKYKRPVCDTDQWEFINGW) the chain is Cytoplasmic. A helical transmembrane segment spans residues 347 to 367 (YVLVIISDLMTIIGSILKMEI). The Extracellular segment spans residues 368-376 (KAKNLTNYD). Residues 377–397 (LCSIFLGTSTLLVWVGVIRYL) traverse the membrane as a helical segment. The Cytoplasmic portion of the chain corresponds to 398–419 (GYFQAYNVLILTMQASLPKVLR). The chain crosses the membrane as a helical span at residues 420–440 (FCACAGMIYLGYTFCGWIVLG). Topologically, residues 441–448 (PYHDKFEN) are extracellular. The segment at residues 449 to 469 (LNTVAECLFSLVNGDDMFATF) is an intramembrane region (pore-forming). Positions 461–464 (NGDD) match the Selectivity filter motif. The Extracellular portion of the chain corresponds to 470 to 480 (AQIQQKSILVW). The chain crosses the membrane as a helical span at residues 481-502 (LFSRLYLYSFISLFIYMILSLF). The Cytoplasmic portion of the chain corresponds to 503–566 (IALITDSYDT…RSDDHLIPIS (64 aa)).

The protein belongs to the transient receptor (TC 1.A.4) family. Polycystin subfamily. MCOLN2 sub-subfamily. As to quaternary structure, forms homooligomeric complexes; probably tetrameric. Can heterooligomerize with MCOLN1; heteromeric assemblies have different channel properties as compared to the respective homooligomers and may be tissue-specific. Interacts with TMEM176A.

It localises to the cell membrane. Its subcellular location is the late endosome membrane. It is found in the lysosome membrane. The protein resides in the recycling endosome membrane. It catalyses the reaction Ca(2+)(in) = Ca(2+)(out). The catalysed reaction is Fe(2+)(in) = Fe(2+)(out). Its activity is regulated as follows. Channel activity is reduced by low extracellular/lumenal pH level. In terms of biological role, nonselective cation channel probably playing a role in the regulation of membrane trafficking events. Acts as a Ca(2+)-permeable cation channel with inwardly rectifying activity. May activate ARF6 and be involved in the trafficking of GPI-anchored cargo proteins to the cell surface via the ARF6-regulated recycling pathway. May play a role in immune processes. In adaptive immunity, TRPML2 and TRPML1 may play redundant roles in the function of the specialized lysosomes of B cells. In the innate immune response, may play a role in the regulation of chemokine secretion and macrophage migration. Through a possible and probably tissue-specific heteromerization with MCOLN1 may be at least in part involved in many lysosome-dependent cellular events. Also functions as a Fe(2+) permeable channel. This chain is Mucolipin-2, found in Homo sapiens (Human).